The sequence spans 227 residues: 7-cyano-7-deazaguanine synthase (227 aa).

Residue 8–18 coordinates ATP; sequence FSGGQDSTTCL. Residues cysteine 187, cysteine 196, cysteine 199, and cysteine 202 each contribute to the Zn(2+) site.

It belongs to the QueC family. Requires Zn(2+) as cofactor.

It carries out the reaction 7-carboxy-7-deazaguanine + NH4(+) + ATP = 7-cyano-7-deazaguanine + ADP + phosphate + H2O + H(+). It participates in purine metabolism; 7-cyano-7-deazaguanine biosynthesis. Catalyzes the ATP-dependent conversion of 7-carboxy-7-deazaguanine (CDG) to 7-cyano-7-deazaguanine (preQ(0)). This is 7-cyano-7-deazaguanine synthase from Aliivibrio fischeri (strain MJ11) (Vibrio fischeri).